The sequence spans 482 residues: Ribulose bisphosphate carboxylase large chain (482 aa).

A propeptide spanning residues 1–2 (MS) is cleaved from the precursor. The residue at position 3 (P3) is an N-acetylproline. K14 bears the N6,N6,N6-trimethyllysine mark. N123 and T173 together coordinate substrate. Residue K175 is the Proton acceptor of the active site. A substrate-binding site is contributed by K177. The Mg(2+) site is built by K201, D203, and E204. Residue K201 is modified to N6-carboxylysine. Residue H294 is the Proton acceptor of the active site. R295, H327, and S379 together coordinate substrate.

Belongs to the RuBisCO large chain family. Type I subfamily. As to quaternary structure, heterohexadecamer of 8 large chains and 8 small chains; disulfide-linked. The disulfide link is formed within the large subunit homodimers. Mg(2+) serves as cofactor. In terms of processing, the disulfide bond which can form in the large chain dimeric partners within the hexadecamer appears to be associated with oxidative stress and protein turnover.

It localises to the plastid. The protein localises to the chloroplast. It carries out the reaction 2 (2R)-3-phosphoglycerate + 2 H(+) = D-ribulose 1,5-bisphosphate + CO2 + H2O. The enzyme catalyses D-ribulose 1,5-bisphosphate + O2 = 2-phosphoglycolate + (2R)-3-phosphoglycerate + 2 H(+). In terms of biological role, ruBisCO catalyzes two reactions: the carboxylation of D-ribulose 1,5-bisphosphate, the primary event in carbon dioxide fixation, as well as the oxidative fragmentation of the pentose substrate in the photorespiration process. Both reactions occur simultaneously and in competition at the same active site. In Phytolacca americana (American pokeweed), this protein is Ribulose bisphosphate carboxylase large chain.